The primary structure comprises 263 residues: Aminoglycoside 3'-phosphotransferase (263 aa).

Asp183 acts as the Proton acceptor in catalysis.

The protein belongs to the aminoglycoside phosphotransferase family.

The catalysed reaction is kanamycin A + ATP = kanamycin 3'-phosphate + ADP + H(+). Functionally, resistance to kanamycin and structurally-related aminoglycosides, including amikacin. This Streptomyces ribosidificus protein is Aminoglycoside 3'-phosphotransferase (rph).